The primary structure comprises 654 residues: Probable Xaa-Pro aminopeptidase P (654 aa).

Mn(2+) is bound by residues D449, D460, E558, and E572.

It belongs to the peptidase M24B family. Mn(2+) is required as a cofactor.

The enzyme catalyses Release of any N-terminal amino acid, including proline, that is linked to proline, even from a dipeptide or tripeptide.. Functionally, catalyzes the removal of a penultimate prolyl residue from the N-termini of peptides. In Aspergillus fumigatus (strain CBS 144.89 / FGSC A1163 / CEA10) (Neosartorya fumigata), this protein is Probable Xaa-Pro aminopeptidase P (ampp).